A 372-amino-acid chain; its full sequence is L-selectin (372 aa).

The signal sequence occupies residues 1-28 (MIFPWKCQSTQRDLCNIFKLWGWTMLCC). A propeptide spanning residues 29–38 (DFLAHHGTDC) is cleaved from the precursor. Topologically, residues 39-332 (WTYHYSEKPM…FSMIKEGDYN (294 aa)) are extracellular. One can recognise a C-type lectin domain in the interval 55–155 (RFCRENYTDL…ACHKLKAALC (101 aa)). 10 disulfides stabilise this stretch: Cys57–Cys155, Cys128–Cys147, Cys128–Cys160, Cys160–Cys171, Cys165–Cys180, Cys182–Cys191, Cys197–Cys241, Cys227–Cys254, Cys259–Cys303, and Cys289–Cys316. N-linked (GlcNAc...) asparagine glycosylation is found at Asn60 and Asn104. Positions 118, 120, 126, 143, and 144 each coordinate Ca(2+). Positions 156-192 (YTASCQPWSCSGHGECVEIINNYTCNCDVGYYGPQCQ) constitute an EGF-like domain. Asn177 carries an N-linked (GlcNAc...) asparagine glycan. Sushi domains lie at 195-256 (IQCE…TCQV) and 257-318 (IQCE…ICQK). N-linked (GlcNAc...) asparagine glycans are attached at residues Asn216, Asn226, Asn232, Asn246, and Asn271. The chain crosses the membrane as a helical span at residues 333–355 (PLFIPVAVMVTAFSGLAFIIWLA). Residues 356–372 (RRLKKGKKSKKSMDDPY) are Cytoplasmic-facing.

The protein belongs to the selectin/LECAM family. As to quaternary structure, interaction with SELPLG/PSGL1 and PODXL2 is required for promoting recruitment and rolling of leukocytes. This interaction is dependent on the sialyl Lewis X glycan modification of SELPLG and PODXL2, and tyrosine sulfation modifications of SELPLG. Sulfation on 'Tyr-51' of SELPLG is important for L-selectin binding. In terms of processing, N-glycosylated.

It is found in the cell membrane. Functionally, calcium-dependent lectin that mediates cell adhesion by binding to glycoproteins on neighboring cells. Mediates the adherence of lymphocytes to endothelial cells of high endothelial venules in peripheral lymph nodes. Promotes initial tethering and rolling of leukocytes in endothelia. This Pongo pygmaeus (Bornean orangutan) protein is L-selectin (SELL).